The chain runs to 415 residues: Phosphoribosylamine--glycine ligase (415 aa).

An ATP-grasp domain is found at 108–311 (KKIMEKYNIP…LMQHIIDLDE (204 aa)). An ATP-binding site is contributed by 134 to 191 (IENCELPVVVKKDGLAAGKGVIIADTIEAARSAIEIMYGDEEEGTVVFETFLEGEEFS). 2 residues coordinate Mg(2+): Glu281 and Asn283.

This sequence belongs to the GARS family. It depends on Mg(2+) as a cofactor. Mn(2+) is required as a cofactor.

It carries out the reaction 5-phospho-beta-D-ribosylamine + glycine + ATP = N(1)-(5-phospho-beta-D-ribosyl)glycinamide + ADP + phosphate + H(+). The protein operates within purine metabolism; IMP biosynthesis via de novo pathway; N(1)-(5-phospho-D-ribosyl)glycinamide from 5-phospho-alpha-D-ribose 1-diphosphate: step 2/2. The chain is Phosphoribosylamine--glycine ligase from Staphylococcus aureus (strain MW2).